The following is a 91-amino-acid chain: Cell division topological specificity factor (91 aa).

The protein belongs to the MinE family.

Functionally, prevents the cell division inhibition by proteins MinC and MinD at internal division sites while permitting inhibition at polar sites. This ensures cell division at the proper site by restricting the formation of a division septum at the midpoint of the long axis of the cell. The chain is Cell division topological specificity factor from Bradyrhizobium diazoefficiens (strain JCM 10833 / BCRC 13528 / IAM 13628 / NBRC 14792 / USDA 110).